A 959-amino-acid chain; its full sequence is Atromentin synthetase invA1 (959 aa).

The adenylation (A) domain stretch occupies residues 59–466 (DSSIQTKTFS…SGRIKETVIV (408 aa)). A Carrier domain is found at 598-676 (TPQTETEQTL…SLANYIVALK (79 aa)). Positions 603 to 673 (TEQTLAAIYA…VVSSLANYIV (71 aa)) are thiolation and peptide carrier (T) domain. Position 635 is an O-(pantetheine 4'-phosphoryl)serine (Ser635). Residues 699-946 (PIFMVHPGVG…LMDFDHVPGF (248 aa)) form a thioesterase (TE) domain region.

Belongs to the ATP-dependent AMP-binding enzyme family.

It functions in the pathway secondary metabolite biosynthesis. In terms of biological role, an L-tyrosine:2-oxoglutarate aminotransferase (probably invD) and atromentin synthetase invA1 catalyze consecutive steps to turn over L-tyrosine into atromentin, which represents the generic precursor molecule for the entire terphenylquinone and pulvinic acid family of pigments, which are widely distributed secondary metabolites in homobasidiomycetes. The first step catalyzed by the aminotransferase converts L-tyrosine in to 4-hydroxyphenylpyruvate (4-HPP). Adenylation of two 4-HPP monomers by the invA1 adenylation (A) domain, covalent tethering of the monomers as a thioester and oxoester onto the invA1 thiolation (T) and thioesterase (TE) domains, respectively, and symmetric C-C-bond formation between two monomers catalyzed by the invA1 TE domain leads to atromentin. This chain is Atromentin synthetase invA1 (invA1), found in Paxillus involutus (Naked brimcap).